Here is a 351-residue protein sequence, read N- to C-terminus: F-box protein At1g70590 (351 aa).

The disordered stretch occupies residues M1–N60. The segment covering I32–K41 has biased composition (polar residues). A compositionally biased stretch (low complexity) spans S42 to S59. The F-box domain occupies F62–W111. Residues S105–S141 form a Sel1-like repeat. The stretch at T142–V175 is one TPR repeat.

This Arabidopsis thaliana (Mouse-ear cress) protein is F-box protein At1g70590.